We begin with the raw amino-acid sequence, 388 residues long: Succinate--CoA ligase [ADP-forming] subunit beta (388 aa).

The region spanning lysine 9–glutamate 244 is the ATP-grasp domain. ATP is bound by residues lysine 46, glycine 53–glycine 55, glutamate 99, alanine 102, and glutamate 107. 2 residues coordinate Mg(2+): asparagine 199 and aspartate 213. Residues asparagine 264 and glycine 321–methionine 323 contribute to the substrate site.

It belongs to the succinate/malate CoA ligase beta subunit family. Heterotetramer of two alpha and two beta subunits. Requires Mg(2+) as cofactor.

The catalysed reaction is succinate + ATP + CoA = succinyl-CoA + ADP + phosphate. It catalyses the reaction GTP + succinate + CoA = succinyl-CoA + GDP + phosphate. It functions in the pathway carbohydrate metabolism; tricarboxylic acid cycle; succinate from succinyl-CoA (ligase route): step 1/1. Its function is as follows. Succinyl-CoA synthetase functions in the citric acid cycle (TCA), coupling the hydrolysis of succinyl-CoA to the synthesis of either ATP or GTP and thus represents the only step of substrate-level phosphorylation in the TCA. The beta subunit provides nucleotide specificity of the enzyme and binds the substrate succinate, while the binding sites for coenzyme A and phosphate are found in the alpha subunit. The chain is Succinate--CoA ligase [ADP-forming] subunit beta from Burkholderia ambifaria (strain MC40-6).